A 128-amino-acid chain; its full sequence is Cytochrome c-type biogenesis protein CcmE (128 aa).

At 1–8 (MQKRVRNR) the chain is on the cytoplasmic side. A helical; Signal-anchor for type II membrane protein transmembrane segment spans residues 9–29 (LITIIICFCSAFLGISIILYN). Topologically, residues 30 to 128 (LEKNIVFFLP…KHDENYRPPQ (99 aa)) are periplasmic. Heme is bound by residues His120 and Tyr124.

The protein belongs to the CcmE/CycJ family.

The protein localises to the cell inner membrane. Its function is as follows. Heme chaperone required for the biogenesis of c-type cytochromes. Transiently binds heme delivered by CcmC and transfers the heme to apo-cytochromes in a process facilitated by CcmF and CcmH. The protein is Cytochrome c-type biogenesis protein CcmE of Rickettsia rickettsii (strain Iowa).